A 178-amino-acid chain; its full sequence is Major urinary protein 4 (178 aa).

Residues 1 to 16 (MKLLLCLGLTLVCIHA) form the signal peptide. A disulfide bond links Cys-80 and Cys-173.

This sequence belongs to the calycin superfamily. Lipocalin family. Expressed in lacrimal gland, parotid gland, sublingual gland, nasal mucus, and vomeronasal organ.

The protein resides in the secreted. Functionally, binds pheromones, likely to displace pheromones complexed to urinary MUPs and transport them to the vomeronasal organ (VNO) where they associate with their neuronal receptor(s). MUP4 is highly specific for the male mouse pheromone 2-sec-butyl-4,5-dihydrothiazole (SBT). The chain is Major urinary protein 4 (Mup4) from Mus musculus (Mouse).